The chain runs to 297 residues: MKPQVYHVDAFTSQPFRGNSAGVVFPADNLSEAQMQLIARELGHSETAFLLHSDDSDVRIRYFTPTVEVPICGHATVAAHYVRAKVLGLGNCTVWQTSLAGKHRVTIEKHHDGYRISLEQGTPGFEPPLEGETRAAIINALHLTEDDILPGLPIQVATTGHSKVMIPLKPEVDIDALSPDLNALTAISKQIGCNGFFPFQIRPGKNETDGRMFSPAIGIVEDPVTGNANGPMGAWLVHHNVLPHDGNVLRVKGHQGRALGRDGMIEVTVTIRDNQPEKVTISGAAVILFHAEWAIKL.

The active site involves Glu-46.

Belongs to the PhzF family. As to quaternary structure, homodimer and homotetramer.

This is an uncharacterized protein from Escherichia coli O157:H7.